Here is a 151-residue protein sequence, read N- to C-terminus: Large ribosomal subunit protein bL9 (151 aa).

The protein belongs to the bacterial ribosomal protein bL9 family.

Binds to the 23S rRNA. The sequence is that of Large ribosomal subunit protein bL9 from Lacticaseibacillus casei (strain BL23) (Lactobacillus casei).